The chain runs to 173 residues: Shikimate kinase 2 (173 aa).

ATP is bound at residue G12 to T17. Residues T16 and D32 each coordinate Mg(2+). Substrate contacts are provided by D34, R58, and G79. An LID domain region spans residues E112 to R126. R120 lines the ATP pocket. R139 contributes to the substrate binding site. Q155 lines the ATP pocket.

This sequence belongs to the shikimate kinase family. AroL subfamily. As to quaternary structure, monomer. Mg(2+) is required as a cofactor.

The protein localises to the cytoplasm. The enzyme catalyses shikimate + ATP = 3-phosphoshikimate + ADP + H(+). It participates in metabolic intermediate biosynthesis; chorismate biosynthesis; chorismate from D-erythrose 4-phosphate and phosphoenolpyruvate: step 5/7. Catalyzes the specific phosphorylation of the 3-hydroxyl group of shikimic acid using ATP as a cosubstrate. In Pectobacterium carotovorum subsp. carotovorum (strain PC1), this protein is Shikimate kinase 2.